Reading from the N-terminus, the 648-residue chain is Rho GTPase-activating protein 25 (648 aa).

One can recognise a PH domain in the interval 46–151 (RPIKVGWLKK…WVKFLRRVAG (106 aa)). Residues 160–354 (QRLDETVAYE…MMIRDHEVLF (195 aa)) form the Rho-GAP domain. Positions 356–559 (KSKDAPISPP…DLDSLQRTVQ (204 aa)) are disordered. A phosphoserine mark is found at S363, S396, and S403. A compositionally biased stretch (polar residues) spans 393–410 (RTDSFSNTASSPDATSPT). T407 is modified (phosphothreonine). Basic and acidic residues predominate over residues 417 to 431 (QHQEDSGKAPRENPG). Composition is skewed to polar residues over residues 453–462 (SAFQGTTSSK) and 497–515 (DQRTSTYDNVPTSPQSQGN). S537 is modified (phosphoserine). Positions 540-641 (EAGSKNSGED…VKEFVKSMEK (102 aa)) form a coiled coil.

Its function is as follows. GTPase activator for the Rho-type GTPases by converting them to an inactive GDP-bound state. The sequence is that of Rho GTPase-activating protein 25 (Arhgap25) from Mus musculus (Mouse).